The following is a 51-amino-acid chain: Large ribosomal subunit protein eL39 (51 aa).

It belongs to the eukaryotic ribosomal protein eL39 family.

The sequence is that of Large ribosomal subunit protein eL39 from Methanococcoides burtonii (strain DSM 6242 / NBRC 107633 / OCM 468 / ACE-M).